We begin with the raw amino-acid sequence, 101 residues long: Trp operon repressor homolog (101 aa).

The DNA-binding element occupies 59 to 82; the sequence is QREIAQKYGVSIAQITRGSNALKA.

It belongs to the TrpR family. In terms of assembly, homodimer.

The protein resides in the cytoplasm. Functionally, this protein is an aporepressor. When complexed with L-tryptophan it binds the operator region of the trp operon and prevents the initiation of transcription. This Chlamydia caviae (strain ATCC VR-813 / DSM 19441 / 03DC25 / GPIC) (Chlamydophila caviae) protein is Trp operon repressor homolog.